The following is a 422-amino-acid chain: Serine--tRNA ligase (422 aa).

230–232 (TAE) is an L-serine binding site. 261–263 (RNE) lines the ATP pocket. Glu284 lines the L-serine pocket. 347 to 350 (EVSS) provides a ligand contact to ATP. An L-serine-binding site is contributed by Ser383.

This sequence belongs to the class-II aminoacyl-tRNA synthetase family. Type-1 seryl-tRNA synthetase subfamily. As to quaternary structure, homodimer. The tRNA molecule binds across the dimer.

The protein localises to the cytoplasm. The enzyme catalyses tRNA(Ser) + L-serine + ATP = L-seryl-tRNA(Ser) + AMP + diphosphate + H(+). It carries out the reaction tRNA(Sec) + L-serine + ATP = L-seryl-tRNA(Sec) + AMP + diphosphate + H(+). It functions in the pathway aminoacyl-tRNA biosynthesis; selenocysteinyl-tRNA(Sec) biosynthesis; L-seryl-tRNA(Sec) from L-serine and tRNA(Sec): step 1/1. Its function is as follows. Catalyzes the attachment of serine to tRNA(Ser). Is also able to aminoacylate tRNA(Sec) with serine, to form the misacylated tRNA L-seryl-tRNA(Sec), which will be further converted into selenocysteinyl-tRNA(Sec). This Herpetosiphon aurantiacus (strain ATCC 23779 / DSM 785 / 114-95) protein is Serine--tRNA ligase.